The chain runs to 538 residues: MAKLIAFDQDAREGILRGVDALANAVKVTLGPRGRNVVLDKAFGGPLVTNDGVTIARDIDLEDPFENLGAQLVKSVAVKTNDIAGDGTTTATLLAQALIAEGLRNVAAGANPMELNKGISAAAEKTLEELKARATEVSDTKEIANVATVSSRDEVVGEIVAAAMEKVGKDGVVTVEESQSIETALEVTEGISFDKGYLSPYFINDNDTQQAVLDNPAVLLVRNKISSLPDFLPLLEKVVESNRPLLIIAEDVEGEPLQTLVVNSIRKTIKVVAVKSPYFGDRRKAFMDDLAIVTKATVVDPEVGINLNEAGEEVFGTARRITVSKDETIIVDGAGSAEDVEARRGQIRREIANTDSTWDREKAEERLAKLSGGIAVIRVGAATETEVNDRKLRVEDAINAARAAAQEGVIAGGGSALVQIAETLKAYAEEFEGDQKVGVRALATALGKPAYWIASNAGLDGSVVVARTAALPNGEGFNAATLEYGNLINDGVIDPVKVTHSAVVNATSVARMVLTTEASVVEKPAEEAADAHAGHHHH.

Residues 29-32, 86-90, Gly-413, 478-480, and Asp-494 each bind ATP; these read TLGP, DGTTT, and NAA.

The protein belongs to the chaperonin (HSP60) family. As to quaternary structure, forms a cylinder of 14 subunits composed of two heptameric rings stacked back-to-back. Interacts with the co-chaperonin GroES.

It localises to the cytoplasm. It carries out the reaction ATP + H2O + a folded polypeptide = ADP + phosphate + an unfolded polypeptide.. Functionally, together with its co-chaperonin GroES, plays an essential role in assisting protein folding. The GroEL-GroES system forms a nano-cage that allows encapsulation of the non-native substrate proteins and provides a physical environment optimized to promote and accelerate protein folding. The polypeptide is Chaperonin GroEL 1 (Corynebacterium glutamicum (strain ATCC 13032 / DSM 20300 / JCM 1318 / BCRC 11384 / CCUG 27702 / LMG 3730 / NBRC 12168 / NCIMB 10025 / NRRL B-2784 / 534)).